A 141-amino-acid chain; its full sequence is ATP synthase epsilon chain (141 aa).

This sequence belongs to the ATPase epsilon chain family. F-type ATPases have 2 components, CF(1) - the catalytic core - and CF(0) - the membrane proton channel. CF(1) has five subunits: alpha(3), beta(3), gamma(1), delta(1), epsilon(1). CF(0) has three main subunits: a, b and c.

The protein resides in the cell inner membrane. Its function is as follows. Produces ATP from ADP in the presence of a proton gradient across the membrane. This Methylobacillus flagellatus (strain ATCC 51484 / DSM 6875 / VKM B-1610 / KT) protein is ATP synthase epsilon chain.